The primary structure comprises 186 residues: Small ribosomal subunit protein uS4 (186 aa).

In terms of domain architecture, S4 RNA-binding spans 106–170 (RRLQTIVYRK…SPLKDEDHPI (65 aa)). The segment at 151-186 (EEEEVDYSPYSPLKDEDHPIRCEARGESPEETAAEE) is disordered. Over residues 163–178 (LKDEDHPIRCEARGES) the composition is skewed to basic and acidic residues.

The protein belongs to the universal ribosomal protein uS4 family. As to quaternary structure, part of the 30S ribosomal subunit. Contacts protein S5. The interaction surface between S4 and S5 is involved in control of translational fidelity.

One of the primary rRNA binding proteins, it binds directly to 16S rRNA where it nucleates assembly of the body of the 30S subunit. Functionally, with S5 and S12 plays an important role in translational accuracy. The polypeptide is Small ribosomal subunit protein uS4 (Methanopyrus kandleri (strain AV19 / DSM 6324 / JCM 9639 / NBRC 100938)).